The primary structure comprises 166 residues: Ureidoglycolate lyase (166 aa).

Belongs to the ureidoglycolate lyase family. Homodimer. Requires Ni(2+) as cofactor.

The catalysed reaction is (S)-ureidoglycolate = urea + glyoxylate. The protein operates within nitrogen metabolism; (S)-allantoin degradation. In terms of biological role, catalyzes the catabolism of the allantoin degradation intermediate (S)-ureidoglycolate, generating urea and glyoxylate. Involved in the utilization of allantoin as nitrogen source. This Rhizobium etli (strain CIAT 652) protein is Ureidoglycolate lyase.